The following is a 376-amino-acid chain: Glutamate 5-kinase (376 aa).

Lys-15 is an ATP binding site. Residues Ser-55, Asp-142, and Asn-154 each coordinate substrate. ATP is bound by residues 174 to 175 and 216 to 222; these read TD and TGGMATK. The 79-residue stretch at 281–359 folds into the PUA domain; the sequence is AGKVLVDAGA…AEIEQLLGYR (79 aa).

Belongs to the glutamate 5-kinase family.

It localises to the cytoplasm. It carries out the reaction L-glutamate + ATP = L-glutamyl 5-phosphate + ADP. It functions in the pathway amino-acid biosynthesis; L-proline biosynthesis; L-glutamate 5-semialdehyde from L-glutamate: step 1/2. Its function is as follows. Catalyzes the transfer of a phosphate group to glutamate to form L-glutamate 5-phosphate. The chain is Glutamate 5-kinase from Trichlorobacter lovleyi (strain ATCC BAA-1151 / DSM 17278 / SZ) (Geobacter lovleyi).